The chain runs to 41 residues: uncharacterized protein (41 aa).

It localises to the plastid. It is found in the chloroplast. This is an uncharacterized protein from Trieres chinensis (Marine centric diatom).